Consider the following 456-residue polypeptide: MLHLYNSLTRKKEPFVSLRPGKIGMYVCGITVYDHCHLGHARSMVAFDVMVRYLRSQGFDVTYVRNITDIDDKIIARASERGVSIDELTAQYIDAMNNDTHALNILPPDHEPRATGHIETIIRLIQRLLEKGNAYVSDNGDVCYEVDTFPEYGKLSHKDIEGLVSGSRVEIVKEKRSPLDFVLWKKAKPGEPSWPSPWGEGRPGWHIECSAMAMHELGEQFDIHGGGLDLQFPHHENEIAQSEAATGKPFANYWLHVGMLQVNGEKMAKSIGNFYTIADVLKEHHPEVIRYFLLSSHYRSPLNYSEENLLNAKKALIRLYQAVKDVPPQTADSKLDEYWQEQFNQAMNDDFNTPVALSVLFQLAHEVNKSNSPALAHTLKNLAGILGFLQKDPESFLQSGLAEEEKLVIEQLIAERLQARAERNWAKADQIRADLLSKGIELEDGATGTTWRRIAE.

Cys-28 is a binding site for Zn(2+). Positions 30–40 match the 'HIGH' region motif; sequence ITVYDHCHLGH. Residues Cys-209, His-234, and Glu-238 each coordinate Zn(2+). The 'KMSKS' region signature appears at 266 to 270; sequence KMAKS. An ATP-binding site is contributed by Lys-269.

It belongs to the class-I aminoacyl-tRNA synthetase family. As to quaternary structure, monomer. The cofactor is Zn(2+).

Its subcellular location is the cytoplasm. The catalysed reaction is tRNA(Cys) + L-cysteine + ATP = L-cysteinyl-tRNA(Cys) + AMP + diphosphate. This is Cysteine--tRNA ligase from Legionella pneumophila (strain Paris).